The sequence spans 161 residues: MIALYPGSFDPLTYGHLDIIERAARLFDRVVVAVLRNPAKVPLFTVEERLSQIQKAVRHLDNVEVEAFHGLTVTVARRLDARVLLRGLRAVSDFEAELQMAQTNRTLATEIETLFLSTSTEHSFLSSSLVKNIAAAGGPVSHMVPEHIEKELRTRFAGAPL.

S8 lines the substrate pocket. ATP-binding positions include 8–9 (SF) and H16. K40, T72, and R86 together coordinate substrate. ATP-binding positions include 87 to 89 (GLR), E97, and 122 to 128 (HSFLSSS).

This sequence belongs to the bacterial CoaD family. As to quaternary structure, homohexamer. It depends on Mg(2+) as a cofactor.

It localises to the cytoplasm. The enzyme catalyses (R)-4'-phosphopantetheine + ATP + H(+) = 3'-dephospho-CoA + diphosphate. Its pathway is cofactor biosynthesis; coenzyme A biosynthesis; CoA from (R)-pantothenate: step 4/5. Its function is as follows. Reversibly transfers an adenylyl group from ATP to 4'-phosphopantetheine, yielding dephospho-CoA (dPCoA) and pyrophosphate. The protein is Phosphopantetheine adenylyltransferase of Gloeobacter violaceus (strain ATCC 29082 / PCC 7421).